Consider the following 451-residue polypeptide: Tubulin gamma-2 chain (451 aa).

Position 131 is a phosphoserine; by BRSK1 (Ser-131). 142–148 (AGGTGSG) contacts GTP.

Belongs to the tubulin family. Component of the gamma-tubulin ring complex (gTuRC) consisting of TUBGCP2, TUBGCP3, TUBGCP4, TUBGCP5 and TUBGCP6 and gamma-tubulin TUBG1 or TUBG2. TUBGCP2, TUBGCP3, TUBGCP4, TUBGCP5 and TUBGCP6 assemble in a 5:5:2:1:1 stoichiometry; each is associated with a gamma-tubulin, thereby arranging 14 gamma-tubulins in a helical manner. Gamma-tubulin at the first position is blocked by TUBGCP3 at the last position, allowing 13 protafilaments to grow into a microtubule. Interacts with alpha-beta tubulin heterodimers; the interaction allows microtubules to nucleate from the gTuRC. Phosphorylation at Ser-131 by BRSK1 regulates centrosome duplication, possibly by mediating relocation of gamma-tubulin and its associated proteins from the cytoplasm to the centrosome.

It localises to the cytoplasm. The protein localises to the cytoskeleton. It is found in the microtubule organizing center. The protein resides in the centrosome. In terms of biological role, tubulin is the major constituent of microtubules, protein filaments consisting of alpha- and beta-tubulin heterodimers. Gamma-tubulin is a key component of the gamma-tubulin ring complex (gTuRC) which mediates microtubule nucleation. The gTuRC regulates the minus-end nucleation of alpha-beta tubulin heterodimers that grow into microtubule protafilaments, a critical step in centrosome duplication and spindle formation. The polypeptide is Tubulin gamma-2 chain (TUBG2) (Bos taurus (Bovine)).